A 256-amino-acid polypeptide reads, in one-letter code: Sugar fermentation stimulation protein homolog (256 aa).

Belongs to the SfsA family.

This chain is Sugar fermentation stimulation protein homolog, found in Prochlorococcus marinus (strain MIT 9211).